A 402-amino-acid polypeptide reads, in one-letter code: Phosphoglycerate kinase (402 aa).

Residues 24-26, R40, 63-66, R122, and R155 contribute to the substrate site; these read DFN and HFGR. Residues K206, G297, E328, and 357–360 contribute to the ATP site; that span reads GGDS.

It belongs to the phosphoglycerate kinase family. Monomer.

The protein resides in the cytoplasm. It carries out the reaction (2R)-3-phosphoglycerate + ATP = (2R)-3-phospho-glyceroyl phosphate + ADP. The protein operates within carbohydrate degradation; glycolysis; pyruvate from D-glyceraldehyde 3-phosphate: step 2/5. The polypeptide is Phosphoglycerate kinase (Synechococcus sp. (strain WH7803)).